Consider the following 405-residue polypeptide: Cytoplasmic tRNA 2-thiolation protein 2 (405 aa).

The protein belongs to the CTU2/NCS2 family.

It is found in the cytoplasm. Its pathway is tRNA modification; 5-methoxycarbonylmethyl-2-thiouridine-tRNA biosynthesis. In terms of biological role, plays a central role in 2-thiolation of mcm(5)S(2)U at tRNA wobble positions of tRNA(Lys), tRNA(Glu) and tRNA(Gln). May act by forming a heterodimer with NCS6/CTU1 that ligates sulfur from thiocarboxylated URM1 onto the uridine of tRNAs at wobble position. This chain is Cytoplasmic tRNA 2-thiolation protein 2, found in Drosophila melanogaster (Fruit fly).